The following is a 187-amino-acid chain: Ubiquinol-cytochrome c reductase iron-sulfur subunit (187 aa).

A helical transmembrane segment spans residues 15-35; the sequence is LYYATAGAGAVATGAAVWPLI. The Rieske domain occupies 89–185; sequence QLGQLVDTNA…AKFIDETTIQ (97 aa). The [2Fe-2S] cluster site is built by cysteine 129, histidine 131, cysteine 149, and histidine 152. Cysteine 134 and cysteine 151 form a disulfide bridge.

This sequence belongs to the Rieske iron-sulfur protein family. As to quaternary structure, the main subunits of complex b-c1 are: cytochrome b, cytochrome c1 and the Rieske protein. [2Fe-2S] cluster serves as cofactor.

It localises to the cell membrane. The catalysed reaction is a quinol + 2 Fe(III)-[cytochrome c](out) = a quinone + 2 Fe(II)-[cytochrome c](out) + 2 H(+)(out). Its function is as follows. Component of the ubiquinol-cytochrome c reductase complex (complex III or cytochrome b-c1 complex), which is a respiratory chain that generates an electrochemical potential coupled to ATP synthesis. The protein is Ubiquinol-cytochrome c reductase iron-sulfur subunit (petA) of Cereibacter sphaeroides (Rhodobacter sphaeroides).